We begin with the raw amino-acid sequence, 175 residues long: uncharacterized protein (175 aa).

The protein localises to the cytoplasm. Its subcellular location is the nucleus. This is an uncharacterized protein from Schizosaccharomyces pombe (strain 972 / ATCC 24843) (Fission yeast).